Reading from the N-terminus, the 473-residue chain is Serine palmitoyltransferase 1 (473 aa).

Residues 1-15 (MATVAEQWVLVEMVQ) are Lumenal-facing. An interaction with SPTLC2 region spans residues 1–66 (MATVAEQWVL…KEELIEEWQP (66 aa)). A helical membrane pass occupies residues 16-36 (ALYEAPAYHLILEGILILWII). The Cytoplasmic portion of the chain corresponds to 37-473 (RLVFSKTYKL…IREAAQAVLL (437 aa)). Tyrosine 164 carries the post-translational modification Phosphotyrosine; by ABL.

This sequence belongs to the class-II pyridoxal-phosphate-dependent aminotransferase family. Component of the serine palmitoyltransferase (SPT) complex, which is also composed of SPTLC2 or SPTLC3 and SPTSSA or SPTSSB. The heterodimer with SPTLC2 or SPTLC3 forms the catalytic core of the enzyme, while SPTSSA or SPTSSB subunits determine substrate specificity. SPT also interacts with ORMDL proteins, especially ORMDL3, which negatively regulate SPT activity in the presence of ceramides. Forms dimers of heterodimers with SPTLC2. Interacts with RTN4 (isoform B). Pyridoxal 5'-phosphate is required as a cofactor. Post-translationally, phosphorylation at Tyr-164 inhibits activity and promotes cell survival. As to expression, expressed in a variety of tissues. Highest expression in brain, kidney and liver. Expressed in brown and white adipose tissues.

The protein localises to the endoplasmic reticulum membrane. It carries out the reaction L-serine + hexadecanoyl-CoA + H(+) = 3-oxosphinganine + CO2 + CoA. It catalyses the reaction octadecanoyl-CoA + L-serine + H(+) = 3-oxoeicosasphinganine + CO2 + CoA. The catalysed reaction is tetradecanoyl-CoA + L-serine + H(+) = 3-oxohexadecasphinganine + CO2 + CoA. The enzyme catalyses dodecanoyl-CoA + L-serine + H(+) = 3-oxotetradecasphinganine + CO2 + CoA. Its pathway is lipid metabolism; sphingolipid metabolism. SPT complex catalytic activity is negatively regulated by ORMDL proteins, including ORMDL3, in the presence of ceramides. This mechanism allows to maintain ceramide levels at sufficient concentrations for the production of complex sphingolipids, but which prevents the accumulation of ceramides to levels that trigger apoptosis. Component of the serine palmitoyltransferase multisubunit enzyme (SPT) that catalyzes the initial and rate-limiting step in sphingolipid biosynthesis by condensing L-serine and activated acyl-CoA (most commonly palmitoyl-CoA) to form long-chain bases. The SPT complex is also composed of SPTLC2 or SPTLC3 and SPTSSA or SPTSSB. Within this complex, the heterodimer with SPTLC2 or SPTLC3 forms the catalytic core. The composition of the serine palmitoyltransferase (SPT) complex determines the substrate preference. The SPTLC1-SPTLC2-SPTSSA complex shows a strong preference for C16-CoA substrate, while the SPTLC1-SPTLC3-SPTSSA isozyme uses both C14-CoA and C16-CoA as substrates, with a slight preference for C14-CoA. The SPTLC1-SPTLC2-SPTSSB complex shows a strong preference for C18-CoA substrate, while the SPTLC1-SPTLC3-SPTSSB isozyme displays an ability to use a broader range of acyl-CoAs, without apparent preference. Required for adipocyte cell viability and metabolic homeostasis. The chain is Serine palmitoyltransferase 1 (Sptlc1) from Mus musculus (Mouse).